We begin with the raw amino-acid sequence, 300 residues long: ETS homologous factor (300 aa).

A PNT domain is found at 29-115 (STCNVSSGFF…SNLQHLKWNG (87 aa)). The interval 183–202 (ESPDMKKEQDPPAKCHTKKH) is disordered. The span at 185–195 (PDMKKEQDPPA) shows a compositional bias: basic and acidic residues. The segment at residues 207-289 (THLWEFIRDI…DGRRLVYKFG (83 aa)) is a DNA-binding region (ETS).

This sequence belongs to the ETS family.

The protein resides in the nucleus. Functionally, transcriptional activator that may play a role in regulating epithelial cell differentiation and proliferation. May act as a repressor for a specific subset of ETS/AP-1-responsive genes, and as a modulator of the nuclear response to mitogen-activated protein kinase signaling cascades. Binds to DNA sequences containing the consensus nucleotide core sequence GGAA. Involved in regulation of TNFRSF10B/DR5 expression through Ets-binding sequences on the TNFRSF10B/DR5 promoter. This Pan troglodytes (Chimpanzee) protein is ETS homologous factor (EHF).